The chain runs to 159 residues: Transcriptional repressor NrdR (159 aa).

The tract at residues 1-22 is disordered; sequence MRCPFCGSEDTQVKDSRPAEDN. Residues 3–34 fold into a zinc finger; it reads CPFCGSEDTQVKDSRPAEDNTSIRRRRICPDC. Basic and acidic residues predominate over residues 11-22; the sequence is TQVKDSRPAEDN. Residues 49-139 enclose the ATP-cone domain; the sequence is LMVIKKSGRK…VYRDFSHAED (91 aa).

Belongs to the NrdR family. Requires Zn(2+) as cofactor.

Functionally, negatively regulates transcription of bacterial ribonucleotide reductase nrd genes and operons by binding to NrdR-boxes. The protein is Transcriptional repressor NrdR of Agrobacterium fabrum (strain C58 / ATCC 33970) (Agrobacterium tumefaciens (strain C58)).